Consider the following 290-residue polypeptide: Ribosomal protein L11 methyltransferase (290 aa).

Thr-135, Gly-158, Asp-180, and Asn-227 together coordinate S-adenosyl-L-methionine.

The protein belongs to the methyltransferase superfamily. PrmA family.

It localises to the cytoplasm. The enzyme catalyses L-lysyl-[protein] + 3 S-adenosyl-L-methionine = N(6),N(6),N(6)-trimethyl-L-lysyl-[protein] + 3 S-adenosyl-L-homocysteine + 3 H(+). In terms of biological role, methylates ribosomal protein L11. The protein is Ribosomal protein L11 methyltransferase of Chelativorans sp. (strain BNC1).